A 627-amino-acid polypeptide reads, in one-letter code: Carene synthase 3, chloroplastic (627 aa).

The N-terminal 36 residues, 1–36, are a transit peptide targeting the chloroplast; sequence MSVISIVPLASKSCLYKSLMSSTHELKALCRPIATL. D378, D382, and D530 together coordinate Mg(2+). A DDXXD motif motif is present at residues 378–382; that stretch reads DDMYD.

It belongs to the terpene synthase family. Tpsd subfamily. Mg(2+) is required as a cofactor. The cofactor is Mn(2+).

The protein resides in the plastid. It is found in the chloroplast. The catalysed reaction is (2E)-geranyl diphosphate = (+)-car-3-ene + diphosphate. It functions in the pathway terpene metabolism; oleoresin biosynthesis. In terms of biological role, terpene synthase (TPS) involved in defensive oleoresin formation in conifers in response to insect attack or other injury. The sequence is that of Carene synthase 3, chloroplastic (TPS-3car3) from Picea sitchensis (Sitka spruce).